The sequence spans 1344 residues: Protein stu1 (1344 aa).

An HEAT 1 repeat occupies 93–131 (LYPLLVERLGDHKERIRAQAAQSFTDMWLAAPEEVEQCV). A disordered region spans residues 265–292 (HRPVSRAETQASRSVSRLDTHQRPASRM). One copy of the HEAT 2 repeat lies at 508 to 544 (VTFTTRILQHVSGACQDKNVQLRLFAAGWLKTLIQKQ). 5 disordered regions span residues 606 to 637 (RSLLEKDPANPNAHQSAPKDSGPSRKGLANGT), 651 to 847 (AAQK…STPR), 914 to 945 (LTENQTPQPSKVHSDSPIVSNKRVSNQDESVP), 984 to 1004 (PVTHQPDSVTDSSKPSGLSSS), and 1031 to 1054 (SLPHRSSPKHNVLGELTSNEPSQR). Polar residues-rich tracts occupy residues 691–705 (VRTVPTGTSLSSLSS) and 735–747 (ATDSSTRHGNQID). Positions 748–769 (GSPSAAKSKSSTPSLKSVSSTG) are enriched in low complexity. 2 stretches are compositionally biased toward polar residues: residues 828-847 (FSVTPISPNSVSLETPSTPR) and 914-942 (LTENQTPQPSKVHSDSPIVSNKRVSNQDE). Residues 995 to 1004 (SSKPSGLSSS) are compositionally biased toward low complexity.

This sequence belongs to the CLASP family. As to quaternary structure, interacts with microtubules.

Its subcellular location is the cytoplasm. The protein resides in the cytoskeleton. It localises to the nucleus. The protein localises to the spindle. Microtubule binding protein that promotes the stabilization of dynamic microtubules. Required for mitotic spindle formation. This is Protein stu1 (stu1) from Aspergillus fumigatus (strain ATCC MYA-4609 / CBS 101355 / FGSC A1100 / Af293) (Neosartorya fumigata).